The sequence spans 340 residues: KRR1 small subunit processome component homolog (340 aa).

The region spanning 124–192 (DIIKIGNLVH…VRDIVLETMN (69 aa)) is the KH domain. Over residues 228 to 244 (KNKNISKRKQPKSKKPK) the composition is skewed to basic residues. Disordered stretches follow at residues 228-259 (KNKNISKRKQPKSKKPKKEYTPFPPAQPESKI) and 271-324 (NQEQ…KVDV). Positions 269–302 (FLNQEQKQAKRNQERSAKQADAAKKQDERRNKDF) form a coiled coil. Composition is skewed to basic and acidic residues over residues 275-301 (KQAKRNQERSAKQADAAKKQDERRNKD) and 309-324 (APSRKRQAEDSSKVDV).

It belongs to the KRR1 family. In terms of assembly, monomer. Component of the ribosomal small subunit (SSU) processome.

It is found in the nucleus. The protein localises to the nucleolus. Its function is as follows. Required for 40S ribosome biogenesis. Involved in nucleolar processing of pre-18S ribosomal RNA and ribosome assembly. Binds to RNA. Required for female germline development, cell viability during eye development and for survival of dividing cells and epithelial cells during early wing disk development. This is KRR1 small subunit processome component homolog from Drosophila persimilis (Fruit fly).